Here is a 442-residue protein sequence, read N- to C-terminus: Thymidine phosphorylase (442 aa).

Belongs to the thymidine/pyrimidine-nucleoside phosphorylase family. In terms of assembly, homodimer.

The enzyme catalyses thymidine + phosphate = 2-deoxy-alpha-D-ribose 1-phosphate + thymine. It participates in pyrimidine metabolism; dTMP biosynthesis via salvage pathway; dTMP from thymine: step 1/2. Its function is as follows. The enzymes which catalyze the reversible phosphorolysis of pyrimidine nucleosides are involved in the degradation of these compounds and in their utilization as carbon and energy sources, or in the rescue of pyrimidine bases for nucleotide synthesis. In Vibrio parahaemolyticus serotype O3:K6 (strain RIMD 2210633), this protein is Thymidine phosphorylase.